The following is a 324-amino-acid chain: UDP-N-acetylenolpyruvoylglucosamine reductase (324 aa).

The region spanning 36–203 (FRAGGLAELM…THAIFEGYAE (168 aa)) is the FAD-binding PCMH-type domain. Arg183 is an active-site residue. The active-site Proton donor is the Ser232. Glu302 is a catalytic residue.

It belongs to the MurB family. FAD is required as a cofactor.

The protein localises to the cytoplasm. It catalyses the reaction UDP-N-acetyl-alpha-D-muramate + NADP(+) = UDP-N-acetyl-3-O-(1-carboxyvinyl)-alpha-D-glucosamine + NADPH + H(+). Its pathway is cell wall biogenesis; peptidoglycan biosynthesis. Its function is as follows. Cell wall formation. The sequence is that of UDP-N-acetylenolpyruvoylglucosamine reductase from Rhizobium meliloti (strain 1021) (Ensifer meliloti).